A 378-amino-acid polypeptide reads, in one-letter code: Dof zinc finger protein 1 (378 aa).

Low complexity predominate over residues 28–38; sequence GANPNPAATAP. Residues 28-79 are disordered; the sequence is GANPNPAATAPSSVTGGALRGGGGGGAPPVAGGAGAGSTERRARPQKEKALN. The segment covering 45-63 has biased composition (gly residues); that stretch reads ALRGGGGGGAPPVAGGAGA. Residues 66-77 show a composition bias toward basic and acidic residues; the sequence is TERRARPQKEKA. A Dof-type zinc finger spans residues 78 to 132; sequence LNCPRCNSTNTKFCYYNNYSLQQPRYFCKTCRRYWTEGGSLRNVPVGGGSRKNKR. Residues Cys-80, Cys-83, Cys-105, and Cys-108 each contribute to the Zn(2+) site. Disordered regions lie at residues 116-148, 203-222, and 316-378; these read GSLR…ASTA, SLES…NGRG, and LKPT…GTSW. Positions 133 to 148 are enriched in low complexity; the sequence is SSSSAASASPASASTA. Composition is skewed to gly residues over residues 323–338, 350–361, and 369–378; these read GTGG…GVDG, AGGGGGGPGGHD, and MIGGGSGTSW.

The protein resides in the nucleus. Functionally, transcription factor that may transactivate seed storage protein genes in developing seeds. In Oryza sativa subsp. japonica (Rice), this protein is Dof zinc finger protein 1.